The sequence spans 136 residues: Small ribosomal subunit protein uS9 (136 aa).

Residues 115–136 form a disordered region; that stretch reads KVKERKKPGLRKARKARQFSKR. Residues 117 to 136 show a composition bias toward basic residues; sequence KERKKPGLRKARKARQFSKR.

It belongs to the universal ribosomal protein uS9 family.

This Mycoplasmopsis pulmonis (strain UAB CTIP) (Mycoplasma pulmonis) protein is Small ribosomal subunit protein uS9.